A 313-amino-acid chain; its full sequence is Beta-ketoacyl-[acyl-carrier-protein] synthase III (313 aa).

Residues Cys-112 and His-238 contribute to the active site. Positions 239–243 (QANIR) are ACP-binding. The active site involves Asn-268.

Belongs to the thiolase-like superfamily. FabH family. In terms of assembly, homodimer.

It localises to the cytoplasm. It carries out the reaction malonyl-[ACP] + acetyl-CoA + H(+) = 3-oxobutanoyl-[ACP] + CO2 + CoA. The protein operates within lipid metabolism; fatty acid biosynthesis. Functionally, catalyzes the condensation reaction of fatty acid synthesis by the addition to an acyl acceptor of two carbons from malonyl-ACP. Catalyzes the first condensation reaction which initiates fatty acid synthesis and may therefore play a role in governing the total rate of fatty acid production. Possesses both acetoacetyl-ACP synthase and acetyl transacylase activities. Its substrate specificity determines the biosynthesis of branched-chain and/or straight-chain of fatty acids. The sequence is that of Beta-ketoacyl-[acyl-carrier-protein] synthase III from Staphylococcus saprophyticus subsp. saprophyticus (strain ATCC 15305 / DSM 20229 / NCIMB 8711 / NCTC 7292 / S-41).